The sequence spans 501 residues: Cyclin-dependent kinase 19 (501 aa).

Residue Met1 is modified to N-acetylmethionine. The Protein kinase domain occupies 21 to 335; it reads EYEGCKVGRG…SEQALQDPYF (315 aa). Residues 27-35 and Lys52 each bind ATP; that span reads VGRGTYGHV. Asp151 functions as the Proton acceptor in the catalytic mechanism. The tract at residues 362–501 is disordered; the sequence is DEPEEKGDKN…YHSSHQTHRY (140 aa). Low complexity predominate over residues 371–392; sequence NQPQQQNPHQQPAAPAQQTAAP. Residues 408 to 421 are compositionally biased toward gly residues; sequence TAGGATAGGGGAGA. Ser449 carries the post-translational modification Phosphoserine. Residues 467 to 495 show a composition bias toward low complexity; the sequence is YQSSVQGSSQSQSTLGYSSSQQSTQYHSS.

It belongs to the protein kinase superfamily. CMGC Ser/Thr protein kinase family. CDC2/CDKX subfamily.

Its subcellular location is the cytoplasm. It is found in the perinuclear region. The protein resides in the nucleus. It catalyses the reaction L-seryl-[protein] + ATP = O-phospho-L-seryl-[protein] + ADP + H(+). The enzyme catalyses L-threonyl-[protein] + ATP = O-phospho-L-threonyl-[protein] + ADP + H(+). The sequence is that of Cyclin-dependent kinase 19 (Cdk19) from Mus musculus (Mouse).